The primary structure comprises 403 residues: uncharacterized protein (403 aa).

This is an uncharacterized protein from Aquifex aeolicus (strain VF5).